Reading from the N-terminus, the 207-residue chain is LexA repressor (207 aa).

Positions 28–48 form a DNA-binding region, H-T-H motif; it reads RAEIARHLGFKSANAAEEHLK. Active-site for autocatalytic cleavage activity residues include Ser124 and Lys161.

The protein belongs to the peptidase S24 family. Homodimer.

The enzyme catalyses Hydrolysis of Ala-|-Gly bond in repressor LexA.. In terms of biological role, represses a number of genes involved in the response to DNA damage (SOS response), including recA and lexA. In the presence of single-stranded DNA, RecA interacts with LexA causing an autocatalytic cleavage which disrupts the DNA-binding part of LexA, leading to derepression of the SOS regulon and eventually DNA repair. This is LexA repressor from Pseudoalteromonas atlantica (strain T6c / ATCC BAA-1087).